Reading from the N-terminus, the 138-residue chain is U1 small nuclear ribonucleoprotein C (138 aa).

Residues 4–36 (YYCDYCDTFLTHDSPSVRKTHNNGRKHKENVRF) form a Matrin-type zinc finger. The segment at 58 to 138 (QSKPNSQMPP…MGRPPMSLRS (81 aa)) is disordered. Pro residues predominate over residues 67–109 (PNAPPGLMPPPGMLPPPGGMPPGRMPPQGLPFPPPGPIPPPPG). Positions 113 to 138 (MRPPHGQMHMGGPRPQMGRPPMSLRS) are enriched in low complexity.

This sequence belongs to the U1 small nuclear ribonucleoprotein C family. U1 snRNP is composed of the 7 core Sm proteins B/B', D1, D2, D3, E, F and G that assemble in a heptameric protein ring on the Sm site of the small nuclear RNA to form the core snRNP, and at least 3 U1 snRNP-specific proteins U1-70K, U1-A and U1-C. U1-C interacts with U1 snRNA and the 5' splice-site region of the pre-mRNA.

The protein localises to the nucleus. In terms of biological role, component of the spliceosomal U1 snRNP, which is essential for recognition of the pre-mRNA 5' splice-site and the subsequent assembly of the spliceosome. U1-C is directly involved in initial 5' splice-site recognition for both constitutive and regulated alternative splicing. The interaction with the 5' splice-site seems to precede base-pairing between the pre-mRNA and the U1 snRNA. Stimulates commitment or early (E) complex formation by stabilizing the base pairing of the 5' end of the U1 snRNA and the 5' splice-site region. The polypeptide is U1 small nuclear ribonucleoprotein C (Nematostella vectensis (Starlet sea anemone)).